We begin with the raw amino-acid sequence, 288 residues long: Polyketide biosynthesis malonyl CoA-acyl carrier protein transacylase PksC (288 aa).

Residues Ser-87 and His-193 contribute to the active site.

The protein belongs to the FabD family.

Its subcellular location is the cytoplasm. The enzyme catalyses holo-[ACP] + malonyl-CoA = malonyl-[ACP] + CoA. Its pathway is antibiotic biosynthesis; bacillaene biosynthesis. In terms of biological role, involved in some intermediate steps for the synthesis of the antibiotic polyketide bacillaene which is involved in secondary metabolism. It catalyzes the transfer of the malonyl-CoA group to the acyl-carrier-protein AcpK (Mal-AcpK). This Bacillus subtilis (strain 168) protein is Polyketide biosynthesis malonyl CoA-acyl carrier protein transacylase PksC (pksC).